Consider the following 885-residue polypeptide: Cytosolic carboxypeptidase-like protein 5 (885 aa).

Residues 150–576 (YPFSYAECQD…AVAVAALDMA (427 aa)) enclose the Peptidase M14 domain. Histidine 247 and glutamate 250 together coordinate Zn(2+). 2 disordered regions span residues 341-364 (SGSALKTSNQSNTSPPVATPTERE) and 392-428 (ESWEKSGVQREAEHSDENESAQSRGETNSAPSEQVPP). Polar residues predominate over residues 344-356 (ALKTSNQSNTSPP). Basic and acidic residues predominate over residues 393–408 (SWEKSGVQREAEHSDE). The span at 411–428 (SAQSRGETNSAPSEQVPP) shows a compositional bias: polar residues. Histidine 440 contacts Zn(2+). Catalysis depends on glutamate 522, which acts as the Proton donor/acceptor. A compositionally biased stretch (polar residues) spans 606-668 (STGLTSNNRR…KSSPSFTFGT (63 aa)). 2 disordered regions span residues 606-788 (STGL…RTAL) and 866-885 (ALLKNSSRQTDQHIHRSLPT). Basic and acidic residues predominate over residues 682–691 (RECKAQEKRR). Positions 712–749 (LSAPVRAPLSPSSSSSSSSSSPSSSSSAPGPGSISLAG) are enriched in low complexity.

It belongs to the peptidase M14 family. It depends on Zn(2+) as a cofactor.

The protein resides in the cytoplasm. It is found in the cytosol. It localises to the nucleus. The protein localises to the cytoskeleton. Its subcellular location is the spindle. The protein resides in the midbody. It catalyses the reaction gamma-L-glutamyl-L-glutamyl-[protein] + H2O = L-glutamyl-[protein] + L-glutamate. It carries out the reaction (L-glutamyl)(n+1)-gamma-L-glutamyl-L-glutamyl-[protein] + H2O = (L-glutamyl)(n)-gamma-L-glutamyl-L-glutamyl-[protein] + L-glutamate. The catalysed reaction is C-terminal L-alpha-aminoacyl-L-glutamyl-[tubulin] + H2O = C-terminal L-alpha-aminoacyl-[tubulin] + L-glutamate. The enzyme catalyses C-terminal L-alpha-aminoacyl-L-glutamyl-L-glutamyl-[tubulin] + H2O = C-terminal L-alpha-aminoacyl-L-glutamyl-[tubulin] + L-glutamate. In terms of biological role, metallocarboxypeptidase that mediates deglutamylation of tubulin and non-tubulin target proteins. Catalyzes the removal of polyglutamate side chains present on the gamma-carboxyl group of glutamate residues within the C-terminal tail of alpha- and beta-tubulin. Cleaves alpha- and gamma-linked polyglutamate tubulin side-chain, as well as the branching point glutamate. Also catalyzes the removal of alpha-linked glutamate residues from the carboxy-terminus of alpha-tubulin. This Danio rerio (Zebrafish) protein is Cytosolic carboxypeptidase-like protein 5 (agbl5).